The chain runs to 261 residues: Yop proteins translocation protein T (261 aa).

Helical transmembrane passes span 20–40 (FMAC…GVLL), 44–64 (IVCS…YIEV), 77–97 (IILG…LESA), 131–151 (TLIT…ALFH), 180–200 (ILLI…LAEF), 214–234 (VFVL…VIYC), and 239–259 (SHAS…IPVL).

Belongs to the FliR/MopE/SpaR family.

The protein localises to the cell membrane. Its function is as follows. Component of the yop secretion machinery. In Yersinia pestis, this protein is Yop proteins translocation protein T (yscT).